A 227-amino-acid polypeptide reads, in one-letter code: Large ribosomal subunit protein uL1 (227 aa).

It belongs to the universal ribosomal protein uL1 family. Part of the 50S ribosomal subunit.

Its function is as follows. Binds directly to 23S rRNA. The L1 stalk is quite mobile in the ribosome, and is involved in E site tRNA release. Protein L1 is also a translational repressor protein, it controls the translation of the L11 operon by binding to its mRNA. This is Large ribosomal subunit protein uL1 from Tropheryma whipplei (strain TW08/27) (Whipple's bacillus).